We begin with the raw amino-acid sequence, 263 residues long: Undecaprenyl-diphosphatase 2 (263 aa).

8 helical membrane passes run 15 to 37 (GLTE…LIGF), 42 to 62 (AKVF…VIFW), 79 to 99 (SLNL…GVLF), 107 to 127 (LFGP…MIVA), 142 to 162 (ITYK…WPGF), 183 to 203 (AEYT…LDLI), 216 to 236 (LFVT…VSFL), and 242 to 262 (VKLT…YFFI).

The protein belongs to the UppP family.

The protein localises to the cell membrane. The catalysed reaction is di-trans,octa-cis-undecaprenyl diphosphate + H2O = di-trans,octa-cis-undecaprenyl phosphate + phosphate + H(+). In terms of biological role, catalyzes the dephosphorylation of undecaprenyl diphosphate (UPP). Confers resistance to bacitracin. The protein is Undecaprenyl-diphosphatase 2 of Bacillus cereus (strain ATCC 14579 / DSM 31 / CCUG 7414 / JCM 2152 / NBRC 15305 / NCIMB 9373 / NCTC 2599 / NRRL B-3711).